The sequence spans 297 residues: Large ribosomal subunit protein uL18 (297 aa).

Gly-2 carries the N-acetylglycine modification. N6-acetyllysine is present on residues Lys-5 and Lys-48. Residue Ser-185 is modified to Phosphoserine. Position 220 is an N6-acetyllysine; alternate (Lys-220). Lys-220 participates in a covalent cross-link: Glycyl lysine isopeptide (Lys-Gly) (interchain with G-Cter in SUMO1); alternate. Lys-220 participates in a covalent cross-link: Glycyl lysine isopeptide (Lys-Gly) (interchain with G-Cter in SUMO2); alternate. Thr-232 bears the Phosphothreonine mark. Residues 253-297 (YEKKPKKEVKKKRWNRPKMSLAQKKDRVAQKKASFLRAQERAAES) are disordered. Residues 258 to 268 (KKEVKKKRWNR) show a composition bias toward basic residues. A Phosphoserine modification is found at Ser-272.

This sequence belongs to the universal ribosomal protein uL18 family. As to quaternary structure, component of the large ribosomal subunit (LSU). Part of the 5S RNP complex, which is a LSU subcomplex composed of the 5S RNA, RPL5 and RPL11. Component of a hexameric 5S RNP precursor complex, composed of 5S RNA, RRS1, RPF2/BXDC1, RPL5, RPL11 and HEATR3; this complex acts as a precursor for ribosome assembly. Interacts with isoform 1 of NVL in an ATP-dependent manner. Interacts with RRP1B. Interacts with IPO5, IPO7 and KPNB1; these interactions may be involved in RPL5 nuclear import for the assembly of ribosomal subunits.

The protein localises to the cytoplasm. The protein resides in the nucleus. It is found in the nucleolus. Component of the ribosome, a large ribonucleoprotein complex responsible for the synthesis of proteins in the cell. The small ribosomal subunit (SSU) binds messenger RNAs (mRNAs) and translates the encoded message by selecting cognate aminoacyl-transfer RNA (tRNA) molecules. The large subunit (LSU) contains the ribosomal catalytic site termed the peptidyl transferase center (PTC), which catalyzes the formation of peptide bonds, thereby polymerizing the amino acids delivered by tRNAs into a polypeptide chain. The nascent polypeptides leave the ribosome through a tunnel in the LSU and interact with protein factors that function in enzymatic processing, targeting, and the membrane insertion of nascent chains at the exit of the ribosomal tunnel. As part of the 5S RNP/5S ribonucleoprotein particle it is an essential component of the LSU, required for its formation and the maturation of rRNAs. It also couples ribosome biogenesis to p53/TP53 activation. As part of the 5S RNP it accumulates in the nucleoplasm and inhibits MDM2, when ribosome biogenesis is perturbed, mediating the stabilization and the activation of TP53. The sequence is that of Large ribosomal subunit protein uL18 (RPL5) from Homo sapiens (Human).